The primary structure comprises 142 residues: Large ribosomal subunit protein uL11 (142 aa).

It belongs to the universal ribosomal protein uL11 family. As to quaternary structure, part of the ribosomal stalk of the 50S ribosomal subunit. Interacts with L10 and the large rRNA to form the base of the stalk. L10 forms an elongated spine to which L12 dimers bind in a sequential fashion forming a multimeric L10(L12)X complex. In terms of processing, one or more lysine residues are methylated.

Functionally, forms part of the ribosomal stalk which helps the ribosome interact with GTP-bound translation factors. In Xanthomonas campestris pv. campestris (strain 8004), this protein is Large ribosomal subunit protein uL11.